A 344-amino-acid chain; its full sequence is Inositol 2-dehydrogenase/D-chiro-inositol 3-dehydrogenase (344 aa).

This sequence belongs to the Gfo/Idh/MocA family. As to quaternary structure, homotetramer.

The enzyme catalyses myo-inositol + NAD(+) = scyllo-inosose + NADH + H(+). It carries out the reaction 1D-chiro-inositol + NAD(+) = scyllo-inosine + NADH + H(+). The protein operates within polyol metabolism; myo-inositol degradation into acetyl-CoA; acetyl-CoA from myo-inositol: step 1/7. Its function is as follows. Involved in the oxidation of myo-inositol (MI) and D-chiro-inositol (DCI) to 2-keto-myo-inositol (2KMI or 2-inosose) and 1-keto-D-chiro-inositol (1KDCI), respectively. The chain is Inositol 2-dehydrogenase/D-chiro-inositol 3-dehydrogenase from Bacillus licheniformis (strain ATCC 14580 / DSM 13 / JCM 2505 / CCUG 7422 / NBRC 12200 / NCIMB 9375 / NCTC 10341 / NRRL NRS-1264 / Gibson 46).